The primary structure comprises 292 residues: 33 kDa chaperonin (292 aa).

2 cysteine pairs are disulfide-bonded: Cys238/Cys240 and Cys271/Cys274.

It belongs to the HSP33 family. In terms of processing, under oxidizing conditions two disulfide bonds are formed involving the reactive cysteines. Under reducing conditions zinc is bound to the reactive cysteines and the protein is inactive.

The protein localises to the cytoplasm. Functionally, redox regulated molecular chaperone. Protects both thermally unfolding and oxidatively damaged proteins from irreversible aggregation. Plays an important role in the bacterial defense system toward oxidative stress. This chain is 33 kDa chaperonin, found in Latilactobacillus sakei subsp. sakei (strain 23K) (Lactobacillus sakei subsp. sakei).